The following is a 428-amino-acid chain: Putative zinc metalloprotease SACOL1281 (428 aa).

Residue His21 coordinates Zn(2+). Glu22 is an active-site residue. His25 contributes to the Zn(2+) binding site. 4 helical membrane-spanning segments follow: residues 172–194 (FLTL…IGLA), 309–331 (GSTY…GFSF), 352–374 (IISL…LIPI), and 401–420 (TTII…LVTW). Residues 186 to 269 (ALVLFIGLAY…TKSVELTPKK (84 aa)) enclose the PDZ domain.

The protein belongs to the peptidase M50B family. Zn(2+) serves as cofactor.

The protein localises to the cell membrane. The polypeptide is Putative zinc metalloprotease SACOL1281 (Staphylococcus aureus (strain COL)).